Consider the following 211-residue polypeptide: Peptidyl-prolyl cis-trans isomerase FKBP14 (211 aa).

A signal peptide spans 1–19; that stretch reads MRFFLWNAILALWVTVLSG. Cys-38 and Cys-96 form a disulfide bridge. The PPIase FKBP-type domain occupies 45 to 135; the sequence is GDLMLVHYEG…IFNIDLLEIR (91 aa). An EF-hand 1 domain is found at 135–170; that stretch reads RNGPRSHESFQEMDLNDDWRLSKHEVKVYLQKEFEK. Ca(2+) is bound by residues Asp-148, Asn-150, Asp-152, Arg-154, and Glu-159. Asn-176 carries N-linked (GlcNAc...) asparagine glycosylation. The region spanning 179–211 is the EF-hand 2 domain; the sequence is HHDALVEDIFDKEDEDKDGFISAREFTYVHDEL. Asp-192, Asp-194, Asp-196, and Glu-203 together coordinate Ca(2+). The Prevents secretion from ER signature appears at 208 to 211; it reads HDEL.

Monomer. Homodimer. Interacts with type III, type IV and type X collagens.

It localises to the endoplasmic reticulum lumen. The catalysed reaction is [protein]-peptidylproline (omega=180) = [protein]-peptidylproline (omega=0). Its activity is regulated as follows. Inhibited by tacrolimus/FK506. In terms of biological role, PPIase which accelerates the folding of proteins during protein synthesis. Has a preference for substrates containing 4-hydroxylproline modifications, including type III collagen. May also target type VI and type X collagens. In Mus musculus (Mouse), this protein is Peptidyl-prolyl cis-trans isomerase FKBP14 (Fkbp14).